The primary structure comprises 412 residues: Serine hydroxymethyltransferase (412 aa).

(6S)-5,6,7,8-tetrahydrofolate contacts are provided by residues leucine 117 and 121–123 (GHL). The residue at position 226 (lysine 226) is an N6-(pyridoxal phosphate)lysine.

The protein belongs to the SHMT family. As to quaternary structure, homodimer. Requires pyridoxal 5'-phosphate as cofactor.

Its subcellular location is the cytoplasm. It catalyses the reaction (6R)-5,10-methylene-5,6,7,8-tetrahydrofolate + glycine + H2O = (6S)-5,6,7,8-tetrahydrofolate + L-serine. It functions in the pathway one-carbon metabolism; tetrahydrofolate interconversion. It participates in amino-acid biosynthesis; glycine biosynthesis; glycine from L-serine: step 1/1. Functionally, catalyzes the reversible interconversion of serine and glycine with tetrahydrofolate (THF) serving as the one-carbon carrier. This reaction serves as the major source of one-carbon groups required for the biosynthesis of purines, thymidylate, methionine, and other important biomolecules. Also exhibits THF-independent aldolase activity toward beta-hydroxyamino acids, producing glycine and aldehydes, via a retro-aldol mechanism. The sequence is that of Serine hydroxymethyltransferase from Staphylococcus saprophyticus subsp. saprophyticus (strain ATCC 15305 / DSM 20229 / NCIMB 8711 / NCTC 7292 / S-41).